A 426-amino-acid chain; its full sequence is Glutamate-1-semialdehyde 2,1-aminomutase (426 aa).

N6-(pyridoxal phosphate)lysine is present on K265.

This sequence belongs to the class-III pyridoxal-phosphate-dependent aminotransferase family. HemL subfamily. Homodimer. Pyridoxal 5'-phosphate is required as a cofactor.

The protein localises to the cytoplasm. It catalyses the reaction (S)-4-amino-5-oxopentanoate = 5-aminolevulinate. It participates in porphyrin-containing compound metabolism; protoporphyrin-IX biosynthesis; 5-aminolevulinate from L-glutamyl-tRNA(Glu): step 2/2. The protein is Glutamate-1-semialdehyde 2,1-aminomutase of Salmonella choleraesuis (strain SC-B67).